A 486-amino-acid polypeptide reads, in one-letter code: Kynurenine 3-monooxygenase (486 aa).

A run of 2 helical transmembrane segments spans residues 401 to 424 and 437 to 459; these read LLFWMMPNTWVPLYNSVSFSHMRY and ILTRVLYGASIASVAAIGGLCYR.

It belongs to the aromatic-ring hydroxylase family. KMO subfamily. Requires FAD as cofactor.

The protein localises to the mitochondrion. Its subcellular location is the membrane. The catalysed reaction is L-kynurenine + NADPH + O2 + H(+) = 3-hydroxy-L-kynurenine + NADP(+) + H2O. Its pathway is cofactor biosynthesis; NAD(+) biosynthesis; quinolinate from L-kynurenine: step 1/3. Its function is as follows. Catalyzes the hydroxylation of L-kynurenine (L-Kyn) to form 3-hydroxy-L-kynurenine (L-3OHKyn). Required for synthesis of quinolinic acid. In Anopheles gambiae (African malaria mosquito), this protein is Kynurenine 3-monooxygenase (kh).